The following is a 338-amino-acid chain: Activator of 90 kDa heat shock protein ATPase homolog 1 (338 aa).

K3 carries the N6-acetyllysine modification. K182 is covalently cross-linked (Glycyl lysine isopeptide (Lys-Gly) (interchain with G-Cter in SUMO1)). S193 carries the post-translational modification Phosphoserine. K203 participates in a covalent cross-link: Glycyl lysine isopeptide (Lys-Gly) (interchain with G-Cter in SUMO2). K212 is subject to N6-acetyllysine. The residue at position 223 (Y223) is a Phosphotyrosine; by ABL.

This sequence belongs to the AHA1 family. Interacts with HSPCA/HSP90. Interacts with HSP90AA1; the interaction activates HSP90AA1 ATPase activity. Interacts with HSP90AB1. Interacts with GCH1. Interacts with SRPK1. Interacts with FLCN. Post-translationally, phosphorylation at Tyr-223 enhances binding to chaperone HSP90AA1.

Its subcellular location is the cytoplasm. The protein localises to the cytosol. It localises to the endoplasmic reticulum. Its function is as follows. Acts as a co-chaperone of HSP90AA1. Activates the ATPase activity of HSP90AA1 leading to increase in its chaperone activity. Competes with the inhibitory co-chaperone FNIP1 for binding to HSP90AA1, thereby providing a reciprocal regulatory mechanism for chaperoning of client proteins. Competes with the inhibitory co-chaperone TSC1 for binding to HSP90AA1, thereby providing a reciprocal regulatory mechanism for chaperoning of client proteins. This Mus musculus (Mouse) protein is Activator of 90 kDa heat shock protein ATPase homolog 1 (Ahsa1).